Here is a 202-residue protein sequence, read N- to C-terminus: Glycerol-3-phosphate acyltransferase (202 aa).

4 helical membrane passes run 1-21, 84-104, 116-136, and 143-163; these read MTLI…FGVL, AVAA…FLHF, ILLG…LAVA, and SLAA…FLGF.

Belongs to the PlsY family. In terms of assembly, probably interacts with PlsX.

The protein localises to the cell inner membrane. The enzyme catalyses an acyl phosphate + sn-glycerol 3-phosphate = a 1-acyl-sn-glycero-3-phosphate + phosphate. Its pathway is lipid metabolism; phospholipid metabolism. Functionally, catalyzes the transfer of an acyl group from acyl-phosphate (acyl-PO(4)) to glycerol-3-phosphate (G3P) to form lysophosphatidic acid (LPA). This enzyme utilizes acyl-phosphate as fatty acyl donor, but not acyl-CoA or acyl-ACP. The polypeptide is Glycerol-3-phosphate acyltransferase (Nitrosospira multiformis (strain ATCC 25196 / NCIMB 11849 / C 71)).